The sequence spans 314 residues: Pantothenate synthetase (314 aa).

43 to 50 (MGALHEGH) serves as a coordination point for ATP. Catalysis depends on H50, which acts as the Proton donor. Position 75 (Q75) interacts with (R)-pantoate. Q75 is a beta-alanine binding site. Positions 112–131 (MYPDGTRTSVHPGPLGDDLE) are disordered. Residue 161-164 (GEKD) participates in ATP binding. Q167 contacts (R)-pantoate. ATP contacts are provided by residues V190 and 198-201 (LSSR).

Belongs to the pantothenate synthetase family. As to quaternary structure, homodimer.

The protein localises to the cytoplasm. It carries out the reaction (R)-pantoate + beta-alanine + ATP = (R)-pantothenate + AMP + diphosphate + H(+). The protein operates within cofactor biosynthesis; (R)-pantothenate biosynthesis; (R)-pantothenate from (R)-pantoate and beta-alanine: step 1/1. Functionally, catalyzes the condensation of pantoate with beta-alanine in an ATP-dependent reaction via a pantoyl-adenylate intermediate. This is Pantothenate synthetase from Mycolicibacterium smegmatis (strain ATCC 700084 / mc(2)155) (Mycobacterium smegmatis).